A 1136-amino-acid polypeptide reads, in one-letter code: Probable LRR receptor-like serine/threonine-protein kinase At4g36180 (1136 aa).

A signal peptide spans 1–22 (MAMDISLFFIFLVIYAPLVSYA). The Extracellular portion of the chain corresponds to 23–751 (DESQAEIDAL…TAEGKKKKRK (729 aa)). LRR repeat units follow at residues 93-115 (MLRKLSLRSNSFNGTIPTSLAYC), 117-139 (RLLSVFLQYNSLSGKLPPAMRNL), 141-162 (SLEVFNVAGNRLSGEIPVGLPS), 163-186 (SLQFLDISSNTFSGQIPSGLANLT), 187-210 (QLQLLNLSYNQLTGEIPASLGNLQ), 211-233 (SLQYLWLDFNLLQGTLPSAISNC), 235-256 (SLVHLSASENEIGGVIPAAYGA), and 259-280 (KLEVLSLSNNNFSGTVPFSLFC). N-linked (GlcNAc...) asparagine glycans are attached at residues Asn-105 and Asn-138. Asn-184, Asn-192, and Asn-232 each carry an N-linked (GlcNAc...) asparagine glycan. N-linked (GlcNAc...) asparagine glycosylation is found at Asn-269 and Asn-281. LRR repeat units follow at residues 283-304 (SLTIVQLGFNAFSDIVRPETTA), 309-330 (GLQVLDLQENRISGRFPLWLTN), 333-355 (SLKNLDVSGNLFSGEIPPDIGNL), 357-379 (RLEELKLANNSLTGEIPVEIKQC), 381-403 (SLDVLDFEGNSLKGQIPEFLGYM), 405-426 (ALKVLSLGRNSFSGYVPSSMVN), 429-452 (QLERLNLGENNLNGSFPVELMALT), 453-479 (SLSELDLSGNRFSGAVPVSISNLSNLS), 480-500 (FLNLSGNGFSGEIPASVGNLF), 501-524 (KLTALDLSKQNMSGEVPVELSGLP), 525-546 (NVQVIALQGNNFSGVVPEGFSS), 549-571 (SLRYVNLSSNSFSGEIPQTFGFL), 573-595 (LLVSLSLSDNHISGSIPPEIGNC), 597-620 (ALEVLELRSNRLMGHIPADLSRLP), 621-643 (RLKVLDLGQNNLSGEIPPEISQS), 645-666 (SLNSLSLDHNHLSGVIPGSFSG), 669-691 (NLTKMDLSVNNLTGEIPASLALI), and 694-716 (NLVYFNVSSNNLKGEIPASLGSR). A glycan (N-linked (GlcNAc...) asparagine) is linked at Asn-365. Asn-441, Asn-474, Asn-477, Asn-482, Asn-511, Asn-535, Asn-554, and Asn-594 each carry an N-linked (GlcNAc...) asparagine glycan. Asn-631 is a glycosylation site (N-linked (GlcNAc...) asparagine). N-linked (GlcNAc...) asparagine glycans are attached at residues Asn-669, Asn-679, Asn-699, and Asn-719. Residues 752–772 (MILMIVMAAIGAFLLSLFCCF) traverse the membrane as a helical segment. Topologically, residues 773 to 1136 (YVYTLLKWRK…ADPTSQPSPA (364 aa)) are cytoplasmic. The segment at 786 to 819 (QQSTTGEKKRSPGRTSAGSRVRSSTSRSSTENGE) is disordered. Residues 799-815 (RTSAGSRVRSSTSRSST) are compositionally biased toward low complexity. Phosphothreonine is present on residues Thr-830 and Thr-838. The region spanning 841–1123 (FDEENVLSRT…LEGCRVGPDV (283 aa)) is the Protein kinase domain. Phosphotyrosine occurs at positions 915 and 1010.

It belongs to the protein kinase superfamily. Ser/Thr protein kinase family.

The protein localises to the cell membrane. The catalysed reaction is L-seryl-[protein] + ATP = O-phospho-L-seryl-[protein] + ADP + H(+). It carries out the reaction L-threonyl-[protein] + ATP = O-phospho-L-threonyl-[protein] + ADP + H(+). The sequence is that of Probable LRR receptor-like serine/threonine-protein kinase At4g36180 from Arabidopsis thaliana (Mouse-ear cress).